The primary structure comprises 343 residues: 7-epi-alpha-eudesmol synthase ((2E,6E)-farnesyl diphosphate cyclizing) (343 aa).

Residues D80 and D84 each contribute to the Mg(2+) site. A DDXXD motif motif is present at residues 80–84; the sequence is DDQFD. Position 177 (R177) interacts with substrate. Positions 223 and 227 each coordinate Mg(2+). R230 provides a ligand contact to substrate. E231 lines the Mg(2+) pocket. A substrate-binding site is contributed by 317-318; sequence RY.

This sequence belongs to the terpene synthase family. Mg(2+) is required as a cofactor.

The enzyme catalyses (2E,6E)-farnesyl diphosphate + H2O = 7-epi-alpha-eudesmol + diphosphate. Its pathway is secondary metabolite biosynthesis; terpenoid biosynthesis. In terms of biological role, catalyzes the conversion of (2E,6E)-farnesyl diphosphate (FPP) to yield the bicyclic sesquiterpenol 7-epi-alpha-eudesmol via a 1,10-cyclization, which requires the abstraction of the pyrophosphate from FPP to yield the (E,E)-germacradienyl cation. The only accepted substrate is (2E,6E)-farnesyl diphosphate (FPP). In Streptomyces viridochromogenes (strain DSM 40736 / JCM 4977 / BCRC 1201 / Tue 494), this protein is 7-epi-alpha-eudesmol synthase ((2E,6E)-farnesyl diphosphate cyclizing).